The primary structure comprises 266 residues: Probable carboxylesterase Os04g0669500 (266 aa).

Active-site charge relay system residues include Ser154, Asp208, and His240.

Belongs to the AB hydrolase superfamily. AB hydrolase 2 family.

Possesses carboxylesterase activity in vitro. In Oryza sativa subsp. japonica (Rice), this protein is Probable carboxylesterase Os04g0669500.